The sequence spans 237 residues: MFLTRTEYDRGVNTFSPEGRLFQVEYAIEAIKLGSTAIGLKTKEGVVLAVEKRITSPLLEPSSVEKIMEIDEHIGCAMSGLIADARTLVEHARVETQNHRFSYGEPMTVESTTQALCDLALRFGEGDEESMSRPFGVSLLIAGHDENGPSLYYTDPSGTFWQCNGKAIGSGSEGADSSLQEQFNKDLTLQEAETIALSILKQVMEEKVTPNNVDIAKVAPTYHLYTPSEVEAVISRL.

This sequence belongs to the peptidase T1A family. In terms of assembly, the 26S proteasome consists of a 20S proteasome core and two 19S regulatory subunits. The 20S proteasome core is composed of 28 subunits that are arranged in four stacked rings, resulting in a barrel-shaped structure. The two end rings are each formed by seven alpha subunits, and the two central rings are each formed by seven beta subunits. The catalytic chamber with the active sites is on the inside of the barrel.

The protein localises to the cytoplasm. The protein resides in the nucleus. The proteasome is a multicatalytic proteinase complex which is characterized by its ability to cleave peptides with Arg, Phe, Tyr, Leu, and Glu adjacent to the leaving group at neutral or slightly basic pH. The proteasome has an ATP-dependent proteolytic activity. The protein is Proteasome subunit alpha type-5 (PAE1) of Glycine max (Soybean).